A 134-amino-acid chain; its full sequence is Putative STAG3-like protein 2 (134 aa).

Residues 10–95 (PKVTCRDVLP…GRFKDWMVSM (86 aa)) form the SCD domain.

This sequence belongs to the SCC3 family.

It is found in the nucleus. In Homo sapiens (Human), this protein is Putative STAG3-like protein 2 (STAG3L2).